We begin with the raw amino-acid sequence, 653 residues long: MTEPILALSHICREFMTGDTKVAALADVTLDIDRGELVAIIGSSGSGKSTLLNILGCLDHATSGSYRVAGEDVAALDADALAALRREHFGFIFQRYHLLSELPALENVEIPAVYAGDTASERQARAERLLARLGMAERRGHRPNQLSGGQQQRVSIARALMNGAEVVLADEPTGALDRRSGEEVLKILVELHREGKTIIIVTHDPEVAKRANRVIELRDGLVVSDKRTDAAVATAAASLPADKPDTRSSRWSGLAFRFRETLRMALLSMAAHRLRSFLTMLGIIIGIAAVSSVVALGNASQNKVLSDISNLGTNTIEVFPGKDFGDARAGKIKTLVLDDARALDRQTFIAGVTPTVSTSTTVRYRDRESNVLVNGVDRSYFQVKGTKIAAGALFDAVAVRNIERQAVIDDNTRRTFFSDDQNAGIGRVIWVGKVPCRVVGVIAQQQGGFGSNQNLSVYLPYTTVQAQFTGDRSLRSVLLRVSDEVSTDLAQEAVTTLLTRRHSTKDFVILNTDDIRRTITSTTQTLAFLVAAIAVISLVVGGIGVMNIMLVSVSERIGEIGVRMAVGARREDILQQFLVEATLISSLGGIAGILIAVALGALLNLLLPGFQVSYSTFSIGAAFLTSTAIGIFFGYFPARRAASFDPVVALSRE.

The region spanning 6–244 (LALSHICREF…AAASLPADKP (239 aa)) is the ABC transporter domain. Residue 42-49 (GSSGSGKS) coordinates ATP. Helical transmembrane passes span 277 to 297 (FLTM…VALG), 526 to 546 (LAFL…IGVM), 587 to 607 (LGGI…NLLL), and 617 to 637 (FSIG…GYFP).

The protein belongs to the ABC transporter superfamily. Macrolide exporter (TC 3.A.1.122) family. Homodimer.

The protein localises to the cell inner membrane. Functionally, non-canonical ABC transporter that contains transmembrane domains (TMD), which form a pore in the inner membrane, and an ATP-binding domain (NBD), which is responsible for energy generation. Confers resistance against macrolides. In Bradyrhizobium diazoefficiens (strain JCM 10833 / BCRC 13528 / IAM 13628 / NBRC 14792 / USDA 110), this protein is Macrolide export ATP-binding/permease protein MacB.